We begin with the raw amino-acid sequence, 124 residues long: Small ribosomal subunit protein bS6 (124 aa).

The disordered stretch occupies residues 96–124; it reads ETGPSPMMKEVQREEAKKAAAAQPTEAQA. The span at 114-124 shows a compositional bias: low complexity; it reads AAAAQPTEAQA.

The protein belongs to the bacterial ribosomal protein bS6 family.

Binds together with bS18 to 16S ribosomal RNA. The chain is Small ribosomal subunit protein bS6 from Burkholderia mallei (strain ATCC 23344).